The following is a 259-amino-acid chain: GEM-like protein 1 (259 aa).

Positions 1-11 (MSGQENHDHGR) are enriched in basic and acidic residues. A disordered region spans residues 1-79 (MSGQENHDHG…PSPAPRNTMD (79 aa)). Over residues 13-30 (SSTPAAASEPSKAAAHSS) the composition is skewed to low complexity. The GRAM domain occupies 138-215 (KVFKQTFDCL…NQLKAVNPST (78 aa)).

The protein belongs to the GEM family. In terms of assembly, interacts with AFH1.

The polypeptide is GEM-like protein 1 (FIP1) (Arabidopsis thaliana (Mouse-ear cress)).